The chain runs to 152 residues: Protein SprT-like (152 aa).

A SprT-like domain is found at 7–148 (QRLVEEVSLQ…GKCKGKLNLI (142 aa)). His67 serves as a coordination point for Zn(2+). Residue Glu68 is part of the active site. Zn(2+) is bound at residue His71.

It belongs to the SprT family. The cofactor is Zn(2+).

It localises to the cytoplasm. This is Protein SprT-like from Bacillus anthracis (strain A0248).